Reading from the N-terminus, the 437-residue chain is MKCLGKRRGQAAAFLPLCWLFLKILQPGHSHLYNNRYAGDKVIRFIPKTEEEAYALKKISYQLKVDLWQPSSISYVSEGTVTDVHIPQNGSRALLAFLQEANIQYKVLIEDLQKTLEKGSSLHTQRNRRSLSGYNYEVYHSLEEIQNWMHHLNKTHSGLIHMFSIGRSYEGRSLFILKLGRRSRLKRAVWIDCGIHAREWIGPAFCQWFVKEALLTYKSDPAMRKMLNHLYFYIMPVFNVDGYHFSWTNDRFWRKTRSRNSRFRCRGVDANRNWKVKWCDEGASMHPCDDTYCGPFPESEPEVKAVANFLRKHRKHIRAYLSFHAYAQMLLYPYSYKYATIPNFRCVESAAYKAVNALQSVYGVRYRYGPASTTLYVSSGSSMDWAYKNGIPYAFAFELRDTGYFGFLLPEMLIKPTCTETMLAVKNITMHLLKKCP.

Positions 1–30 (MKCLGKRRGQAAAFLPLCWLFLKILQPGHS) are cleaved as a signal peptide. The propeptide at 31-129 (HLYNNRYAGD…SSLHTQRNRR (99 aa)) is activation peptide. N-linked (GlcNAc...) asparagine glycosylation is found at Asn89 and Asn153. Residues 138-432 (VYHSLEEIQN…LAVKNITMHL (295 aa)) form the Peptidase M14 domain. The Zn(2+) site is built by His196 and Glu199. Substrate is bound by residues 196-199 (HARE), Arg254, and 271-272 (NR). The cysteines at positions 265 and 288 are disulfide-linked. His324 serves as a coordination point for Zn(2+). Residues 325–326 (AY) and Tyr376 each bind substrate. The active-site Proton donor/acceptor is the Glu398. Asn427 carries an N-linked (GlcNAc...) asparagine glycan.

It belongs to the peptidase M14 family. The cofactor is Zn(2+). In terms of tissue distribution, expressed in the hippocampus, nucleus raphe, and cortex.

The protein resides in the secreted. It localises to the extracellular space. It is found in the extracellular matrix. Its function is as follows. May be involved in the proteolytic inactivation of enkephalins and neurotensin in some brain areas. May convert inactive angiotensin I into the biologically active angiotensin II. Releases a C-terminal amino acid, with preference for large hydrophobic C-terminal amino acids and shows only very weak activity toward small amino acids and histidine. This Homo sapiens (Human) protein is Carboxypeptidase A6 (CPA6).